Here is a 94-residue protein sequence, read N- to C-terminus: Co-chaperonin GroES (94 aa).

Belongs to the GroES chaperonin family. Heptamer of 7 subunits arranged in a ring. Interacts with the chaperonin GroEL.

Its subcellular location is the cytoplasm. Its function is as follows. Together with the chaperonin GroEL, plays an essential role in assisting protein folding. The GroEL-GroES system forms a nano-cage that allows encapsulation of the non-native substrate proteins and provides a physical environment optimized to promote and accelerate protein folding. GroES binds to the apical surface of the GroEL ring, thereby capping the opening of the GroEL channel. This is Co-chaperonin GroES from Staphylococcus epidermidis (strain ATCC 35984 / DSM 28319 / BCRC 17069 / CCUG 31568 / BM 3577 / RP62A).